We begin with the raw amino-acid sequence, 189 residues long: Large ribosomal subunit protein bL25 (189 aa).

This sequence belongs to the bacterial ribosomal protein bL25 family. CTC subfamily. Part of the 50S ribosomal subunit; part of the 5S rRNA/L5/L18/L25 subcomplex. Contacts the 5S rRNA. Binds to the 5S rRNA independently of L5 and L18.

Its function is as follows. This is one of the proteins that binds to the 5S RNA in the ribosome where it forms part of the central protuberance. This chain is Large ribosomal subunit protein bL25, found in Azobacteroides pseudotrichonymphae genomovar. CFP2.